Consider the following 333-residue polypeptide: Na(+)-translocating ferredoxin:NAD(+) oxidoreductase complex subunit B (333 aa).

Residues 1–27 are hydrophobic; sequence MLNAILVPVGILGVFGLIFGIGLAIAA. The 4Fe-4S domain occupies 33–92; sequence YEDPRVPLVRAALPGANCGGCGLPGCDALAANIVGGSAAIDACPVGGASCAAAVAEIMGM. Residues Cys-50, Cys-53, Cys-58, Cys-75, Cys-138, Cys-142, Cys-148, Cys-152, Cys-172, Cys-175, Cys-178, Cys-182, Cys-217, Cys-220, Cys-223, Cys-227, Cys-246, Cys-249, Cys-252, Cys-256, Cys-279, Cys-282, Cys-285, Cys-289, Cys-310, Cys-313, Cys-316, and Cys-320 each coordinate [4Fe-4S] cluster. 6 consecutive 4Fe-4S ferredoxin-type domains span residues 126–162, 163–192, 207–237, 239–266, 270–299, and 301–330; these read REAMIASGGSKGCRYGCLGYGTCKAVCPFDAIVIGED, GLPKVDPEKCTSCGKCVEACPKSIMTLVPE, KIARLSCTTACIACGACVKACRFDAITVENN, AKIDYDKCRQCYECVDKCPMNCISGDVE, STAYIIEENCIACGLCAKNCPVNAITGEIK, and PPYVIDHDMCIGCGICFDKCRKSAIEMRPN.

The protein belongs to the 4Fe4S bacterial-type ferredoxin family. RnfB subfamily. As to quaternary structure, the complex is composed of six subunits: RnfA, RnfB, RnfC, RnfD, RnfE and RnfG. [4Fe-4S] cluster is required as a cofactor.

The protein localises to the cell membrane. It catalyses the reaction 2 reduced [2Fe-2S]-[ferredoxin] + Na(+)(in) + NAD(+) + H(+) = 2 oxidized [2Fe-2S]-[ferredoxin] + Na(+)(out) + NADH. Part of a membrane-bound complex that couples electron transfer with translocation of ions across the membrane. Couples electron transfer from reduced ferredoxin to NAD(+) with electrogenic movement of Na(+) out of the cell. Involved in caffeate respiration. The protein is Na(+)-translocating ferredoxin:NAD(+) oxidoreductase complex subunit B of Acetobacterium woodii (strain ATCC 29683 / DSM 1030 / JCM 2381 / KCTC 1655 / WB1).